A 142-amino-acid polypeptide reads, in one-letter code: MLKKDKSELTDIEYIVTQENGTEPPFMNEYWNHFAKGIYVDKISGKPLFTSEEKFHSECGWPSFSKALDDDEIIELVDKSFGMVRTEVRSEESNSHLGHVFNDGPKESGGLRYCINSAAIQFIPYEKLEELGYGDLISHFDK.

The region spanning 2–125 (LKKDKSELTD…NSAAIQFIPY (124 aa)) is the MsrB domain. The active-site Nucleophile is the C114.

It belongs to the MsrB Met sulfoxide reductase family.

The catalysed reaction is L-methionyl-[protein] + [thioredoxin]-disulfide + H2O = L-methionyl-(R)-S-oxide-[protein] + [thioredoxin]-dithiol. This chain is Peptide methionine sulfoxide reductase MsrB, found in Staphylococcus aureus (strain Mu3 / ATCC 700698).